A 55-amino-acid chain; its full sequence is Small ribosomal subunit protein eS31 (55 aa).

Cys-26, Cys-29, Cys-44, and Cys-47 together coordinate Zn(2+).

This sequence belongs to the eukaryotic ribosomal protein eS31 family. Part of the 30S ribosomal subunit. Zn(2+) serves as cofactor.

This is Small ribosomal subunit protein eS31 from Archaeoglobus fulgidus (strain ATCC 49558 / DSM 4304 / JCM 9628 / NBRC 100126 / VC-16).